Here is a 706-residue protein sequence, read N- to C-terminus: Glycine--tRNA ligase beta subunit (706 aa).

Belongs to the class-II aminoacyl-tRNA synthetase family. In terms of assembly, tetramer of two alpha and two beta subunits.

The protein resides in the cytoplasm. It carries out the reaction tRNA(Gly) + glycine + ATP = glycyl-tRNA(Gly) + AMP + diphosphate. This chain is Glycine--tRNA ligase beta subunit, found in Acidobacterium capsulatum (strain ATCC 51196 / DSM 11244 / BCRC 80197 / JCM 7670 / NBRC 15755 / NCIMB 13165 / 161).